We begin with the raw amino-acid sequence, 124 residues long: Glutaredoxin-2 (124 aa).

Cys13 and Cys16 form a disulfide bridge.

It belongs to the glutaredoxin family. As to quaternary structure, homodimer.

The protein resides in the host cytoplasm. In terms of biological role, glutaredoxin necessary for virion morphogenesis and virus replication. Functions as a thiol-disulfide transfer protein between membrane-associated OPG128 and substrates OPG095 or OPG053. The complete pathway for formation of disulfide bonds in intracellular virion membrane proteins sequentially involves oxidation of OPG072, OPG128 and OPG088. Exhibit thioltransferase and dehydroascorbate reductase activities in vitro. In Mus musculus (Mouse), this protein is Glutaredoxin-2 (OPG088).